The sequence spans 588 residues: Aspartate--tRNA ligase (588 aa).

Glu172 contributes to the L-aspartate binding site. The segment at 196-199 (QLFK) is aspartate. Arg218 provides a ligand contact to L-aspartate. Residues 218–220 (RDE) and Gln227 each bind ATP. L-aspartate is bound at residue His449. Position 483 (Glu483) interacts with ATP. Arg490 contributes to the L-aspartate binding site. Residue 535–538 (GLDR) participates in ATP binding.

The protein belongs to the class-II aminoacyl-tRNA synthetase family. Type 1 subfamily. As to quaternary structure, homodimer.

It is found in the cytoplasm. The catalysed reaction is tRNA(Asp) + L-aspartate + ATP = L-aspartyl-tRNA(Asp) + AMP + diphosphate. Its function is as follows. Catalyzes the attachment of L-aspartate to tRNA(Asp) in a two-step reaction: L-aspartate is first activated by ATP to form Asp-AMP and then transferred to the acceptor end of tRNA(Asp). This Haemophilus influenzae (strain PittGG) protein is Aspartate--tRNA ligase.